Reading from the N-terminus, the 187-residue chain is UPF0301 protein YqgE (187 aa).

It belongs to the UPF0301 (AlgH) family.

This Escherichia coli O139:H28 (strain E24377A / ETEC) protein is UPF0301 protein YqgE.